Reading from the N-terminus, the 173-residue chain is Crossover junction endodeoxyribonuclease RuvC (173 aa).

Catalysis depends on residues Asp-8, Glu-67, and Asp-139. Residues Asp-8, Glu-67, and Asp-139 each coordinate Mg(2+).

The protein belongs to the RuvC family. Homodimer which binds Holliday junction (HJ) DNA. The HJ becomes 2-fold symmetrical on binding to RuvC with unstacked arms; it has a different conformation from HJ DNA in complex with RuvA. In the full resolvosome a probable DNA-RuvA(4)-RuvB(12)-RuvC(2) complex forms which resolves the HJ. Mg(2+) is required as a cofactor.

Its subcellular location is the cytoplasm. It catalyses the reaction Endonucleolytic cleavage at a junction such as a reciprocal single-stranded crossover between two homologous DNA duplexes (Holliday junction).. The RuvA-RuvB-RuvC complex processes Holliday junction (HJ) DNA during genetic recombination and DNA repair. Endonuclease that resolves HJ intermediates. Cleaves cruciform DNA by making single-stranded nicks across the HJ at symmetrical positions within the homologous arms, yielding a 5'-phosphate and a 3'-hydroxyl group; requires a central core of homology in the junction. The consensus cleavage sequence is 5'-(A/T)TT(C/G)-3'. Cleavage occurs on the 3'-side of the TT dinucleotide at the point of strand exchange. HJ branch migration catalyzed by RuvA-RuvB allows RuvC to scan DNA until it finds its consensus sequence, where it cleaves and resolves the cruciform DNA. The sequence is that of Crossover junction endodeoxyribonuclease RuvC from Shewanella sp. (strain MR-4).